We begin with the raw amino-acid sequence, 667 residues long: UvrABC system protein B (667 aa).

One can recognise a Helicase ATP-binding domain in the interval 25–180 (DSLQNQHRFQ…LLRALVSVQY (156 aa)). An ATP-binding site is contributed by 38–45 (GATGTGKT). A Beta-hairpin motif is present at residues 91-114 (YYDYYQPEAYIPVSDTYIEKSSSI). A Helicase C-terminal domain is found at 429 to 595 (QVDDLLGEIK…PIVKRSSNSI (167 aa)). Residues 626-661 (PELIQQLEAQMKEAAKNLEFESAAKYRDRIKQLRDK) form the UVR domain.

The protein belongs to the UvrB family. In terms of assembly, forms a heterotetramer with UvrA during the search for lesions. Interacts with UvrC in an incision complex.

It localises to the cytoplasm. Functionally, the UvrABC repair system catalyzes the recognition and processing of DNA lesions. A damage recognition complex composed of 2 UvrA and 2 UvrB subunits scans DNA for abnormalities. Upon binding of the UvrA(2)B(2) complex to a putative damaged site, the DNA wraps around one UvrB monomer. DNA wrap is dependent on ATP binding by UvrB and probably causes local melting of the DNA helix, facilitating insertion of UvrB beta-hairpin between the DNA strands. Then UvrB probes one DNA strand for the presence of a lesion. If a lesion is found the UvrA subunits dissociate and the UvrB-DNA preincision complex is formed. This complex is subsequently bound by UvrC and the second UvrB is released. If no lesion is found, the DNA wraps around the other UvrB subunit that will check the other stand for damage. In Microcystis aeruginosa (strain NIES-843 / IAM M-2473), this protein is UvrABC system protein B.